Here is a 245-residue protein sequence, read N- to C-terminus: Octanoyltransferase (245 aa).

One can recognise a BPL/LPL catalytic domain in the interval 54–238 (GEATELVWLL…AFENIFGETR (185 aa)). Residues 92-99 (RGGQLTYH), 167-169 (AIG), and 180-182 (GIA) contribute to the substrate site. Cysteine 198 acts as the Acyl-thioester intermediate in catalysis.

Belongs to the LipB family.

The protein resides in the cytoplasm. It carries out the reaction octanoyl-[ACP] + L-lysyl-[protein] = N(6)-octanoyl-L-lysyl-[protein] + holo-[ACP] + H(+). It participates in protein modification; protein lipoylation via endogenous pathway; protein N(6)-(lipoyl)lysine from octanoyl-[acyl-carrier-protein]: step 1/2. In terms of biological role, catalyzes the transfer of endogenously produced octanoic acid from octanoyl-acyl-carrier-protein onto the lipoyl domains of lipoate-dependent enzymes. Lipoyl-ACP can also act as a substrate although octanoyl-ACP is likely to be the physiological substrate. In Rhodopseudomonas palustris (strain ATCC BAA-98 / CGA009), this protein is Octanoyltransferase.